Reading from the N-terminus, the 469-residue chain is Protein YfjI (469 aa).

In Escherichia coli (strain K12), this protein is Protein YfjI (yfjI).